The sequence spans 237 residues: tRNA1(Val) (adenine(37)-N6)-methyltransferase (237 aa).

The protein belongs to the methyltransferase superfamily. tRNA (adenine-N(6)-)-methyltransferase family.

It is found in the cytoplasm. It catalyses the reaction adenosine(37) in tRNA1(Val) + S-adenosyl-L-methionine = N(6)-methyladenosine(37) in tRNA1(Val) + S-adenosyl-L-homocysteine + H(+). In terms of biological role, specifically methylates the adenine in position 37 of tRNA(1)(Val) (anticodon cmo5UAC). In Tolumonas auensis (strain DSM 9187 / NBRC 110442 / TA 4), this protein is tRNA1(Val) (adenine(37)-N6)-methyltransferase.